Reading from the N-terminus, the 331-residue chain is 5-dehydro-2-deoxygluconokinase (331 aa).

This sequence belongs to the carbohydrate kinase PfkB family.

The catalysed reaction is 5-dehydro-2-deoxy-D-gluconate + ATP = 6-phospho-5-dehydro-2-deoxy-D-gluconate + ADP + H(+). Its pathway is polyol metabolism; myo-inositol degradation into acetyl-CoA; acetyl-CoA from myo-inositol: step 5/7. Its function is as follows. Catalyzes the phosphorylation of 5-dehydro-2-deoxy-D-gluconate (2-deoxy-5-keto-D-gluconate or DKG) to 6-phospho-5-dehydro-2-deoxy-D-gluconate (DKGP). In Halalkalibacterium halodurans (strain ATCC BAA-125 / DSM 18197 / FERM 7344 / JCM 9153 / C-125) (Bacillus halodurans), this protein is 5-dehydro-2-deoxygluconokinase.